We begin with the raw amino-acid sequence, 823 residues long: ATP-dependent RNA helicase HrpA (823 aa).

A Helicase ATP-binding domain is found at 16-179 (IKVLKNHNVL…FNNAPVVSIE (164 aa)). 29–36 (SPTGSGKT) is a binding site for ATP. The DEAH box motif lies at 126–129 (DEAH). The Helicase C-terminal domain occupies 203-374 (KIKEIVLNVI…EVVLRMADIG (172 aa)).

This sequence belongs to the DEAD box helicase family. DEAH subfamily.

It catalyses the reaction ATP + H2O = ADP + phosphate + H(+). Its function is as follows. Has RNA-stimulated ATPase activity and RNA helicase activity. Involved in global regulation of gene expression. Could be involved in RNA processing and post-transcriptional gene regulation. Essential for both tick transmission and mouse infection. The polypeptide is ATP-dependent RNA helicase HrpA (Borreliella burgdorferi (strain ATCC 35210 / DSM 4680 / CIP 102532 / B31) (Borrelia burgdorferi)).